A 46-amino-acid chain; its full sequence is Large ribosomal subunit protein bL34 (46 aa).

Residues 25–46 (TASGRQVLRRRRAKGRYRLAVS) form a disordered region. Residues 31–46 (VLRRRRAKGRYRLAVS) show a composition bias toward basic residues.

Belongs to the bacterial ribosomal protein bL34 family.

The polypeptide is Large ribosomal subunit protein bL34 (Synechococcus sp. (strain JA-3-3Ab) (Cyanobacteria bacterium Yellowstone A-Prime)).